A 150-amino-acid chain; its full sequence is Ribosome maturation factor RimP (150 aa).

This sequence belongs to the RimP family.

It is found in the cytoplasm. In terms of biological role, required for maturation of 30S ribosomal subunits. The polypeptide is Ribosome maturation factor RimP (Acidithiobacillus ferrooxidans (strain ATCC 23270 / DSM 14882 / CIP 104768 / NCIMB 8455) (Ferrobacillus ferrooxidans (strain ATCC 23270))).